Consider the following 174-residue polypeptide: Calcineurin subunit B (174 aa).

4 EF-hand domains span residues 21 to 56 (EEIERIRKRFIKIDANQSGSIDRNEFLSIPSVASNP), 60 to 88 (RLFSVVDEDGGGDVDFQEFINSLSVFSVH), 90 to 125 (NKEEKLKFAFKIYDIDRDGYISNGELYLVLKMMVGT), and 131 to 166 (QLQQIVDKTIMEVDKDRDGKISFEEFKDIVSGSNVT). Asp34, Asn36, Ser38, Ser40, Glu45, Asp66, Asp68, Asp72, Glu77, Asp103, Asp105, Asp107, Tyr109, Glu114, Asp144, Asp146, Asp148, Lys150, and Glu155 together coordinate Ca(2+).

This sequence belongs to the calcineurin regulatory subunit family. Composed of a catalytic subunit (A) and a regulatory subunit (B).

Functionally, regulatory subunit of calcineurin, a calcium-dependent, calmodulin stimulated protein phosphatase. Confers calcium sensitivity. The chain is Calcineurin subunit B (cnb1) from Schizosaccharomyces pombe (strain 972 / ATCC 24843) (Fission yeast).